The primary structure comprises 138 residues: MTRINLTLVSELADQHLMAEYRELPRVFGAVRKHVANGKRVRDFKISPTFILGAGHVTFFYDKLEFLRKRQIELIAECLKRGFNIKDTTVQDISDIPQEFRGDYIPHEASIAISQARLDEKIAQRPTWYKYYGKAIYA.

Threonine 2 (nucleophile; via amide nitrogen) is an active-site residue. The Proton acceptor role is filled by glutamate 23.

In terms of assembly, monomer.

It carries out the reaction Cleaves the N-glycosidic bond between the 5'-pyrimidine residue in cyclobutadipyrimidine (in DNA) and the corresponding deoxy-D-ribose residue.. The enzyme catalyses 2'-deoxyribonucleotide-(2'-deoxyribose 5'-phosphate)-2'-deoxyribonucleotide-DNA = a 3'-end 2'-deoxyribonucleotide-(2,3-dehydro-2,3-deoxyribose 5'-phosphate)-DNA + a 5'-end 5'-phospho-2'-deoxyribonucleoside-DNA + H(+). Functionally, participates in the repair of UV-damaged DNA by excising pyrimidine dimers that are the major UV-lesions. DNA glycosylase activity hydrolyzes the glycosylic bond of the 5' pyrimidine of the dimer. This leaves apurinic/apyrimidic (AP) sites in the DNA. These AP sites are removed by the AP lyase activity which cleaves the intrapyrimidine phosphodiester bond. Catalysis proceeds via a protonated imine covalent intermediate between the alpha-amino group of the N-terminal threonine residue and the C1' of the deoxyribose sugar of the 5' pyrimidine at the dimer site. This is Endonuclease V from Enterobacteria phage T4 (Bacteriophage T4).